We begin with the raw amino-acid sequence, 132 residues long: Small ribosomal subunit protein uS8 (132 aa).

This sequence belongs to the universal ribosomal protein uS8 family. As to quaternary structure, part of the 30S ribosomal subunit. Contacts proteins S5 and S12.

Its function is as follows. One of the primary rRNA binding proteins, it binds directly to 16S rRNA central domain where it helps coordinate assembly of the platform of the 30S subunit. This is Small ribosomal subunit protein uS8 from Rickettsia akari (strain Hartford).